We begin with the raw amino-acid sequence, 251 residues long: Transmembrane ascorbate-dependent reductase CYB561 (251 aa).

M1 is modified (N-acetylmethionine). At 1 to 16 (MEGGAAAATPTALPYY) the chain is on the cytoplasmic side. The helical transmembrane segment at 17 to 37 (VAFSQLLGLTLVAMTGAWLGL) threads the bilayer. Residues 19-220 (FSQLLGLTLV…FGGAVLYILT (202 aa)) form the Cytochrome b561 domain. Residues 38-51 (YRGGIAWESDLQFN) lie on the Vesicular side of the membrane. A helical membrane pass occupies residues 52-72 (AHPLCMVIGLIFLQGNALLVY). 3 residues coordinate heme b: H53, R73, and K80. Topologically, residues 73 to 85 (RVFRNEAKRTTKV) are cytoplasmic. Residues K80 and K84 each coordinate L-ascorbate. The helical transmembrane segment at 86–106 (LHGLLHIFALVIALVGLVAVF) threads the bilayer. Residues H87, 116-119 (DLYS), and H121 contribute to the heme b site. Residues 107–124 (DYHRKKGYADLYSLHSWC) lie on the Vesicular side of the membrane. Residues 125 to 145 (GILVFVLYFVQWLVGFSFFLF) traverse the membrane as a helical segment. Residues 146–158 (PGASFSLRSRYRP) are Cytoplasmic-facing. R153 contributes to the L-ascorbate binding site. The chain crosses the membrane as a helical span at residues 159–179 (QHIFFGATIFLLSVGTALLGL). Positions 160 and 181 each coordinate heme b. Residues 180–198 (KEALLFNLGGKYSAFEPEG) lie on the Vesicular side of the membrane. A helical transmembrane segment spans residues 199–219 (VLANVLGLLLACFGGAVLYIL). Residues 220–251 (TRADWKRPSQAEEQALSMDFKTLTEGDSPGSQ) lie on the Cytoplasmic side of the membrane. K225 provides a ligand contact to heme b. The residue at position 247 (S247) is a Phosphoserine.

Requires heme b as cofactor. As to expression, expressed in many tissues, in particular the brain especially in the cortex and hippocampus.

It is found in the cytoplasmic vesicle. It localises to the secretory vesicle. The protein resides in the chromaffin granule membrane. It catalyses the reaction monodehydro-L-ascorbate radical(out) + L-ascorbate(in) = monodehydro-L-ascorbate radical(in) + L-ascorbate(out). Its function is as follows. Transmembrane reductase that uses ascorbate as an electron donor in the cytoplasm and transfers electrons across membranes to reduce monodehydro-L-ascorbate radical in the lumen of secretory vesicles. It is therefore involved the regeneration and homeostasis within secretory vesicles of ascorbate which in turn provides reducing equivalents needed to support the activity of intravesicular enzymes. This chain is Transmembrane ascorbate-dependent reductase CYB561, found in Homo sapiens (Human).